Consider the following 66-residue polypeptide: Large ribosomal subunit protein bL35 (66 aa).

Belongs to the bacterial ribosomal protein bL35 family.

In Brucella canis (strain ATCC 23365 / NCTC 10854 / RM-666), this protein is Large ribosomal subunit protein bL35.